The sequence spans 397 residues: DNA replication and repair protein RecF (397 aa).

30-37 (GPNGQGKT) serves as a coordination point for ATP.

It belongs to the RecF family.

It is found in the cytoplasm. The RecF protein is involved in DNA metabolism; it is required for DNA replication and normal SOS inducibility. RecF binds preferentially to single-stranded, linear DNA. It also seems to bind ATP. This chain is DNA replication and repair protein RecF, found in Beutenbergia cavernae (strain ATCC BAA-8 / DSM 12333 / CCUG 43141 / JCM 11478 / NBRC 16432 / NCIMB 13614 / HKI 0122).